Reading from the N-terminus, the 613-residue chain is Pentatricopeptide repeat-containing protein At2g45350, chloroplastic (613 aa).

PPR repeat units lie at residues 85–119 (DPFLWNAVIKSHSHGKDPRQALLLLCLMLENGVSV), 120–154 (DKFSLSLVLKACSRLGFVKGGMQIHGFLKKTGLWS), 155–185 (DLFLQNCLIGLYLKCGCLGLSRQMFDRMPKR), 186–216 (DSVSYNSMIDGYVKCGLIVSARELFDLMPME), 219–250 (NLISWNSMISGYAQTSDGVDIASKLFADMPEK), 251–285 (DLISWNSMIDGYVKHGRIEDAKGLFDVMPRRDVVT), 286–312 (WATMIDGYAKLGFVHHAKTLFDQMPHR), 313–347 (DVVAYNSMMAGYVQNKYHMEALEIFSDMEKESHLL), 349–383 (DDTTLVIVLPAIAQLGRLSKAIDMHLYIVEKQFYL), 384–414 (GGKLGVALIDMYSKCGSIQHAMLVFEGIENK), 415–449 (SIDHWNAMIGGLAIHGLGESAFDMLLQIERLSLKP), 450–480 (DDITFVGVLNACSHSGLVKEGLLCFELMRRK), and 486–516 (RLQHYGCMVDILSRSGSIELAKNLIEEMPVE). A type E motif region spans residues 521–596 (IWRTFLTACS…IPGCSWIELD (76 aa)).

It belongs to the PPR family. PCMP-E subfamily. As to quaternary structure, interacts with DYW1.

It localises to the plastid. The protein resides in the chloroplast. Functionally, plays a major role in chloroplast RNA editing. Acts as a site-recognition transacting factor to recruit C-deaminase. Involved in single RNA editing events. Required for the edition of the site 1 of ndhD (ndhD-1 site corresponding to cytidine-2), which is a plastid-encoded subunit of the NADH-plastoquinone oxidoreductase. The interaction with DYW1 is required for its function in editing the ndhD-1 site. The polypeptide is Pentatricopeptide repeat-containing protein At2g45350, chloroplastic (CRR4) (Arabidopsis thaliana (Mouse-ear cress)).